The primary structure comprises 344 residues: MPMQGAQRKLLGSLNSTPTATSNLGLAANHTGAPCLEVPIPDGLFLSLGLVSLVENVLVVAAIAKNRNLHSSMYCFICCLAVSDLLVSGSNMLETAIILLLEAGALVTRASVVQQLHNTIDVLTCSSMLCSLCFLGAIAVDRYISIFYALRYHSIMTLPRAQRAIAAIWVASVLSSTLFITYYDHAAVLLCLVVFFLAMLVLMAVLYVHMLARACQHAQGIIRLHKRQPPAHKGFGLRGAATLTILLGIFFLCWGPFFLHLTLVVFCPQHMTCSCIFKNFKVFLTLIICNTIIDPLIYAFRSQELRRTLKEVLLCSRWPGCWAEGGGDSVWPGSCVTLRGPLPP.

The Extracellular segment spans residues 1-37 (MPMQGAQRKLLGSLNSTPTATSNLGLAANHTGAPCLE). N-linked (GlcNAc...) asparagine glycosylation occurs at Asn29. Residues 38–63 (VPIPDGLFLSLGLVSLVENVLVVAAI) traverse the membrane as a helical segment. Over 64-72 (AKNRNLHSS) the chain is Cytoplasmic. Residues 73–93 (MYCFICCLAVSDLLVSGSNML) traverse the membrane as a helical segment. The Extracellular segment spans residues 94-118 (ETAIILLLEAGALVTRASVVQQLHN). The helical transmembrane segment at 119–140 (TIDVLTCSSMLCSLCFLGAIAV) threads the bilayer. Residues 141-163 (DRYISIFYALRYHSIMTLPRAQR) lie on the Cytoplasmic side of the membrane. The chain crosses the membrane as a helical span at residues 164–183 (AIAAIWVASVLSSTLFITYY). The Extracellular portion of the chain corresponds to 184–191 (DHAAVLLC). A helical membrane pass occupies residues 192 to 211 (LVVFFLAMLVLMAVLYVHML). The Cytoplasmic portion of the chain corresponds to 212 to 240 (ARACQHAQGIIRLHKRQPPAHKGFGLRGA). The helical transmembrane segment at 241-266 (ATLTILLGIFFLCWGPFFLHLTLVVF) threads the bilayer. Residues 267-279 (CPQHMTCSCIFKN) lie on the Extracellular side of the membrane. A helical membrane pass occupies residues 280-300 (FKVFLTLIICNTIIDPLIYAF). Residues 301–344 (RSQELRRTLKEVLLCSRWPGCWAEGGGDSVWPGSCVTLRGPLPP) lie on the Cytoplasmic side of the membrane. Residue Cys315 is the site of S-palmitoyl cysteine attachment.

The protein belongs to the G-protein coupled receptor 1 family. In terms of assembly, interacts with MGRN1, but does not undergo MGRN1-mediated ubiquitination; this interaction competes with GNAS-binding and thus inhibits agonist-induced cAMP production. Interacts with OPN3; the interaction results in a decrease in MC1R-mediated cAMP signaling and ultimately a decrease in melanin production in melanocytes.

The protein resides in the cell membrane. Receptor for MSH (alpha, beta and gamma) and ACTH. The activity of this receptor is mediated by G proteins which activate adenylate cyclase. Mediates melanogenesis, the production of eumelanin (black/brown) and phaeomelanin (red/yellow), via regulation of cAMP signaling in melanocytes. This chain is Melanocyte-stimulating hormone receptor (MC1R), found in Callimico goeldii (Goeldi's marmoset).